The primary structure comprises 530 residues: 4-alpha-glucanotransferase (530 aa).

The protein belongs to the disproportionating enzyme family.

Its subcellular location is the cytoplasm. It catalyses the reaction Transfers a segment of a (1-&gt;4)-alpha-D-glucan to a new position in an acceptor, which may be glucose or a (1-&gt;4)-alpha-D-glucan.. The chain is 4-alpha-glucanotransferase (malQ) from Chlamydia caviae (strain ATCC VR-813 / DSM 19441 / 03DC25 / GPIC) (Chlamydophila caviae).